The following is a 541-amino-acid chain: MQHKLLFSAIALALSYSAQAVIVPEGTQLDEKQHIVINNGAEPQSFDPHKTEGVPESNVAYQLLEGLVTSDSEGKLQPGAAESWENTPDFKTWTFHLRKDAKWSNGDPVTAHDFVFAWRRLVDPATAAPYASYLSYLQVENAQDIIDGKKKPAELGVEXKDDYTFVVHTTNPVPYTVSXXTHQSLLPLPXKVVEKLGDAWVKKENYVGNGAYKLANHIINEKIEFERNPLYWNDKETVINSATFLAIENPSTDVARYRAGDLDMTSYGLPPEQFAKLQKELPGEVYVTRTLGTYSYELNNKKAPFDNVNIRKALNLSLDRNVITDKVLGQGQTPTYVFTPTYIEEGHLIQQPAYSKEPMAQRNEEAIKLLEEAGYSKANPLKFSILYNTNENHKKVAIAAASMWKANTKGLIDVKLENQEWKTYIDSRRAGRYDVARAGWNADYNQATTFGNYFLSNSSNNTAKYANPEYDKAMAESYAATDAEGRAKAYAKAEEILGKDYGIVPIFNYVNPRLVKPYVKGYSGKDPQDHIYLRNLYIIKH.

Residues 1 to 20 form the signal peptide; that stretch reads MQHKLLFSAIALALSYSAQA.

Belongs to the bacterial solute-binding protein 5 family. As to quaternary structure, the complex is composed of two ATP-binding proteins (OppD and OppF), two transmembrane proteins (OppB and OppC) and a solute-binding protein (OppA).

The protein resides in the periplasm. In terms of biological role, part of the ABC transporter complex OppABCDF involved in the uptake of oligopeptides. Plays an important nutritional role. Binds peptides containing from two to five amino acid residues. The protein is Periplasmic oligopeptide-binding protein OppA (oppA) of Haemophilus influenzae (strain ATCC 51907 / DSM 11121 / KW20 / Rd).